The following is an 82-amino-acid chain: Ice-structuring protein B (82 aa).

The N-terminal stretch at Met-1 to Ala-23 is a signal peptide. Positions Arg-24–Pro-44 are cleaved as a propeptide — removed by a dipeptidylpeptidase. Position 81 is an arginine amide (Arg-81).

It belongs to the type-I AFP family. In terms of processing, amidated. Detected in liver (at protein level).

Its subcellular location is the secreted. It localises to the extracellular space. Functionally, contributes to protect fish blood from freezing at subzero sea water temperatures. Lowers the blood freezing point. Binds to nascent ice crystals and prevents further growth. The sequence is that of Ice-structuring protein B from Pseudopleuronectes americanus (Winter flounder).